The chain runs to 182 residues: Large ribosomal subunit protein uL15 (182 aa).

Residues 1-52 form a disordered region; it reads MDLSSLRPAKGAVKNKKRIGRGPGSGNGTTAGKGNKGQQSRSGYTRPVSEGG. A compositionally biased stretch (gly residues) spans 21–35; that stretch reads RGPGSGNGTTAGKGN.

This sequence belongs to the universal ribosomal protein uL15 family. In terms of assembly, part of the 50S ribosomal subunit.

Binds to the 23S rRNA. This Chlorobium phaeobacteroides (strain BS1) protein is Large ribosomal subunit protein uL15.